Consider the following 481-residue polypeptide: ATP synthase subunit alpha (481 aa).

An ATP-binding site is contributed by 145–152 (GDRQTGKT).

This sequence belongs to the ATPase alpha/beta chains family. As to quaternary structure, F-type ATPases have 2 components, CF(1) - the catalytic core - and CF(0) - the membrane proton channel. CF(1) has five subunits: alpha(3), beta(3), gamma(1), delta(1), epsilon(1). CF(0) has three main subunits: a(1), b(2) and c(9-12). The alpha and beta chains form an alternating ring which encloses part of the gamma chain. CF(1) is attached to CF(0) by a central stalk formed by the gamma and epsilon chains, while a peripheral stalk is formed by the delta and b chains.

The protein resides in the cell membrane. The enzyme catalyses ATP + H2O + 4 H(+)(in) = ADP + phosphate + 5 H(+)(out). In terms of biological role, produces ATP from ADP in the presence of a proton gradient across the membrane. The alpha chain is a regulatory subunit. The sequence is that of ATP synthase subunit alpha from Carsonella ruddii (strain PV).